The sequence spans 1357 residues: MEFYESAYFIVLIPSIVITVIFLFFWLFMKETLYDEVLAKQKREQKLIPTKTDKKKAEKKKNKKKEIQNGNLHESDSESVPRDFKLSDALAVEDDQVAPVPLNVVETSSSVRERKKKEKKQKPVLEEQVIKESDASKIPGKKVEPVPVTKQPTPPSEAAASKKKPGQKKSKNGSDDQDKKVETLMVPSKRQEALPLHQETKQESGSGKKKASSKKQKTENVFVDEPLIHATTYIPLMDNADSSPVVDKREVIDLLKPDQVEGIQKSGTKKLKTETDKENAEVKFKDFLLSLKTMMFSEDEALCVVDLLKEKSGVIQDALKKSSKGELTTLIHQLQEKDKLLAAVKEDAAATKDRCKQLTQEMMTEKERSNVVITRMKDRIGTLEKEHNVFQNKIHVSYQETQQMQMKFQQVREQMEAEIAHLKQENGILRDAVSNTTNQLESKQSAELNKLRQDYARLVNELTEKTGKLQQEEVQKKNAEQAATQLKVQLQEAERRWEEVQSYIRKRTAEHEAAQQDLQSKFVAKENEVQSLHSKLTDTLVSKQQLEQRLMQLMESEQKRVNKEESLQMQVQDILEQNEALKAQIQQFHSQIAAQTSASVLAEELHKVIAEKDKQIKQTEDSLASERDRLTSKEEELKDIQNMNFLLKAEVQKLQALANEQAAAAHELEKMQQSVYVKDDKIRLLEEQLQHEISNKMEEFKILNDQNKALKSEVQKLQTLVSEQPNKDVVEQMEKCIQEKDEKLKTVEELLETGLIQVATKEEELNAIRTENSSLTKEVQDLKAKQNDQVSFASLVEELKKVIHEKDGKIKSVEELLEAELLKVANKEKTVQDLKQEIKALKEEIGNVQLEKAQQLSITSKVQELQNLLKGKEEQMNTMKAVLEEKEKDLANTGKWLQDLQEENESLKAHVQEVAQHNLKEASSASQFEELEIVLKEKENELKRLEAMLKERESDLSSKTQLLQDVQDENKLFKSQIEQLKQQNYQQASSFPPHEELLKVISEREKEISGLWNELDSLKDAVEHQRKKNNDLREKNWEAMEALASTEKMLQDKVNKTSKERQQQVEAVELEAKEVLKKLFPKVSVPSNLSYGEWLHGFEKKAKECMAGTSGSEEVKVLEHKLKEADEMHTLLQLECEKYKSVLAETEGILQKLQRSVEQEENKWKVKVDESHKTIKQMQSSFTSSEQELERLRSENKDIENLRREREHLEMELEKAEMERSTYVTEVRELKDLLTELQKKLDDSYSEAVRQNEELNLLKAQLNETLTKLRTEQNERQKVAGDLHKAQQSLELIQSKIVKAAGDTTVIENSDVSPETESSEKETMSVSLNQTVTQLQQLLQAVNQQLTKEKEHYQVLE.

Over 1-6 (MEFYES) the chain is Cytoplasmic. The helical; Signal-anchor for type II membrane protein transmembrane segment at 7–29 (AYFIVLIPSIVITVIFLFFWLFM) threads the bilayer. Residues 30-1357 (KETLYDEVLA…KEKEHYQVLE (1328 aa)) are Lumenal-facing. Disordered stretches follow at residues 48 to 81 (IPTK…ESVP) and 103 to 218 (NVVE…KQKT). At Ser75 the chain carries Phosphoserine; by FAM20C. Ser77 carries the phosphoserine modification. The span at 121–135 (QKPVLEEQVIKESDA) shows a compositional bias: basic and acidic residues. Thr153 carries the phosphothreonine modification. A Phosphoserine modification is found at Ser156. Residues 161–171 (SKKKPGQKKSK) are compositionally biased toward basic residues. N-linked (GlcNAc...) asparagine glycosylation is found at Asn172, Asn435, Asn772, Asn904, and Asn1055. A compositionally biased stretch (basic and acidic residues) spans 172 to 182 (NGSDDQDKKVE). Positions 330 to 1356 (LIHQLQEKDK…TKEKEHYQVL (1027 aa)) form a coiled coil. Ser1084 is subject to Phosphoserine. Asn1088 and Asn1263 each carry an N-linked (GlcNAc...) asparagine glycan. Ser1313 carries the post-translational modification Phosphoserine. N-linked (GlcNAc...) asparagine glycosylation occurs at Asn1329.

This sequence belongs to the kinectin family. Parallel homodimers formed between the membrane-bound and the cytosolic form, and also between 2 cytosolic forms. High levels in peripheral blood lymphocytes, testis and ovary, lower levels in spleen, thymus, prostate, small intestine and colon.

The protein localises to the endoplasmic reticulum membrane. Functionally, receptor for kinesin thus involved in kinesin-driven vesicle motility. Accumulates in integrin-based adhesion complexes (IAC) upon integrin aggregation by fibronectin. This chain is Kinectin (KTN1), found in Homo sapiens (Human).